The primary structure comprises 397 residues: Acetate kinase (397 aa).

Asn8 is a Mg(2+) binding site. Lys15 lines the ATP pocket. Substrate is bound at residue Arg89. Asp146 acts as the Proton donor/acceptor in catalysis. ATP is bound by residues 206–210 (HIGNG), 281–283 (DLR), and 328–332 (GVGEN). Position 381 (Glu381) interacts with Mg(2+).

The protein belongs to the acetokinase family. In terms of assembly, homodimer. The cofactor is Mg(2+). Mn(2+) is required as a cofactor.

The protein localises to the cytoplasm. It carries out the reaction acetate + ATP = acetyl phosphate + ADP. The protein operates within metabolic intermediate biosynthesis; acetyl-CoA biosynthesis; acetyl-CoA from acetate: step 1/2. Its function is as follows. Catalyzes the formation of acetyl phosphate from acetate and ATP. Can also catalyze the reverse reaction. The protein is Acetate kinase of Oceanobacillus iheyensis (strain DSM 14371 / CIP 107618 / JCM 11309 / KCTC 3954 / HTE831).